Reading from the N-terminus, the 158-residue chain is MGHFTFTGLCLLAMFLSLRGAECYTCPIDWLPKNGLCYKVFSNPNTWLDAELFCRKFKPGCRLASLHRDADSADLAEYISDYLKVDGSVWIGLNDPQKKRTWVWSDRSSSNYFSWNQGEPNNSKNKEYCVHLWAPTGYLKWNDAPCESLHPFLCQCKY.

A signal peptide spans 1–23; that stretch reads MGHFTFTGLCLLAMFLSLRGAEC. 4 disulfides stabilise this stretch: Cys-26/Cys-37, Cys-54/Cys-154, Cys-61/Cys-156, and Cys-129/Cys-146. The C-type lectin domain occupies 33–155; that stretch reads KNGLCYKVFS…CESLHPFLCQ (123 aa). Residues 119–121 carry the Mannose-binding motif; that stretch reads EPN. Asn-121 carries N-linked (GlcNAc...) asparagine glycosylation. Ca(2+) is bound by residues Glu-127, Asn-142, and Asp-143.

The protein belongs to the true venom lectin family. In terms of assembly, dimer. Probably non-covalently linked. Expressed by the venom gland.

It localises to the secreted. In terms of biological role, recombinant C-type lectin BML-2 is able to agglutinate erythrocytes. May be a calcium-dependent lectin. This is C-type lectin BML-2 from Bungarus multicinctus (Many-banded krait).